A 203-amino-acid polypeptide reads, in one-letter code: Protein-methionine-sulfoxide reductase heme-binding subunit MsrQ (203 aa).

5 helical membrane passes run 13-33 (IAIW…INLG), 79-99 (LLGL…SILE), 116-136 (PYLT…LTST), 147-167 (WQKL…HYLW), and 169-189 (VKTL…LLLL).

It belongs to the MsrQ family. As to quaternary structure, heterodimer of a catalytic subunit (MsrP) and a heme-binding subunit (MsrQ). FMN is required as a cofactor. Heme b serves as cofactor.

It is found in the cell inner membrane. Functionally, part of the MsrPQ system that repairs oxidized periplasmic proteins containing methionine sulfoxide residues (Met-O), using respiratory chain electrons. Thus protects these proteins from oxidative-stress damage caused by reactive species of oxygen and chlorine generated by the host defense mechanisms. MsrPQ is essential for the maintenance of envelope integrity under bleach stress, rescuing a wide series of structurally unrelated periplasmic proteins from methionine oxidation. MsrQ provides electrons for reduction to the reductase catalytic subunit MsrP, using the quinone pool of the respiratory chain. The protein is Protein-methionine-sulfoxide reductase heme-binding subunit MsrQ of Yersinia pseudotuberculosis serotype O:1b (strain IP 31758).